A 141-amino-acid polypeptide reads, in one-letter code: MVTVTLISKPQARVGGNFRVIKIPEECYRCKLYGICMGRLRPGRAYRITEVRPLKYPSPYKCLLNGDEMVPVVVEEENLILPIKLPYIIEGSITSFDKSWCICHPCPSEEALPSRVKIIKVIDRRQCGSGWFFLVEAKPLD.

It belongs to the UPF0179 family.

This Caldivirga maquilingensis (strain ATCC 700844 / DSM 13496 / JCM 10307 / IC-167) protein is UPF0179 protein Cmaq_1008.